The primary structure comprises 54 residues: uncharacterized protein (54 aa).

Residues 6-26 (ILIYLLIFVAGIVIGKIRINV) form a helical membrane-spanning segment.

It is found in the host membrane. This is an uncharacterized protein from Acidianus convivator (ABV).